Consider the following 539-residue polypeptide: Dihydrolipoyllysine-residue acetyltransferase component 2 of pyruvate dehydrogenase complex, mitochondrial (539 aa).

A mitochondrion-targeting transit peptide spans 1 to 102 (MASRIINHSK…SSQMRSVRGF (102 aa)). The interval 102-122 (FSSSSDLPPHQEIGMPSLSPT) is disordered. One can recognise a Lipoyl-binding domain in the interval 111–187 (HQEIGMPSLS…QVGEVIAITV (77 aa)). At Lys-152 the chain carries N6-lipoyllysine. The interval 196-244 (FKDYTPSSDTGPAAPEAKPAPSLPKEEKVEKPASAPEAKISKPSSAPSE) is disordered. The Peripheral subunit-binding (PSBD) domain maps to 248–285 (FASPLARKLAEDNNVPLSSIKGTGPEGRIVKADVEDFL). Residues His-512 and Asp-516 contribute to the active site.

This sequence belongs to the 2-oxoacid dehydrogenase family. The cofactor is (R)-lipoate.

It is found in the mitochondrion matrix. It carries out the reaction N(6)-[(R)-dihydrolipoyl]-L-lysyl-[protein] + acetyl-CoA = N(6)-[(R)-S(8)-acetyldihydrolipoyl]-L-lysyl-[protein] + CoA. In terms of biological role, the pyruvate dehydrogenase complex catalyzes the overall conversion of pyruvate to acetyl-CoA and CO(2). It contains multiple copies of three enzymatic components: pyruvate dehydrogenase (E1), dihydrolipoamide acetyltransferase (E2) and lipoamide dehydrogenase (E3). This chain is Dihydrolipoyllysine-residue acetyltransferase component 2 of pyruvate dehydrogenase complex, mitochondrial, found in Arabidopsis thaliana (Mouse-ear cress).